Here is a 424-residue protein sequence, read N- to C-terminus: Glutamyl-tRNA reductase (424 aa).

Substrate-binding positions include threonine 51 to arginine 54, serine 99, glutamate 104 to glutamine 106, and glutamine 110. Catalysis depends on cysteine 52, which acts as the Nucleophile. NADP(+) is bound at residue glycine 179–glycine 184.

Belongs to the glutamyl-tRNA reductase family. As to quaternary structure, homodimer.

It carries out the reaction (S)-4-amino-5-oxopentanoate + tRNA(Glu) + NADP(+) = L-glutamyl-tRNA(Glu) + NADPH + H(+). Its pathway is porphyrin-containing compound metabolism; protoporphyrin-IX biosynthesis; 5-aminolevulinate from L-glutamyl-tRNA(Glu): step 1/2. Its function is as follows. Catalyzes the NADPH-dependent reduction of glutamyl-tRNA(Glu) to glutamate 1-semialdehyde (GSA). In Methanocorpusculum labreanum (strain ATCC 43576 / DSM 4855 / Z), this protein is Glutamyl-tRNA reductase.